The sequence spans 156 residues: ATP synthase subunit b 1 (156 aa).

A helical membrane pass occupies residues 7 to 29 (LLGQAISFALFVWFCMKYVWPPL).

This sequence belongs to the ATPase B chain family. F-type ATPases have 2 components, F(1) - the catalytic core - and F(0) - the membrane proton channel. F(1) has five subunits: alpha(3), beta(3), gamma(1), delta(1), epsilon(1). F(0) has three main subunits: a(1), b(2) and c(10-14). The alpha and beta chains form an alternating ring which encloses part of the gamma chain. F(1) is attached to F(0) by a central stalk formed by the gamma and epsilon chains, while a peripheral stalk is formed by the delta and b chains.

It is found in the cell inner membrane. F(1)F(0) ATP synthase produces ATP from ADP in the presence of a proton or sodium gradient. F-type ATPases consist of two structural domains, F(1) containing the extramembraneous catalytic core and F(0) containing the membrane proton channel, linked together by a central stalk and a peripheral stalk. During catalysis, ATP synthesis in the catalytic domain of F(1) is coupled via a rotary mechanism of the central stalk subunits to proton translocation. In terms of biological role, component of the F(0) channel, it forms part of the peripheral stalk, linking F(1) to F(0). This is ATP synthase subunit b 1 from Vibrio campbellii (strain ATCC BAA-1116).